The chain runs to 261 residues: Zinc finger protein 664 (261 aa).

C2H2-type zinc fingers lie at residues 3 to 25 (YKCP…QKVH), 31 to 53 (HKCD…WRDH), 59 to 81 (YKCD…KKIH), 87 to 109 (YKCY…MRVH), 115 to 137 (YVCS…QRVH), 143 to 165 (FKCE…QRVH), 171 to 193 (YKCY…QRVH), 199 to 221 (YRCC…QRVH), and 227 to 249 (FKCD…QRVH). A Glycyl lysine isopeptide (Lys-Gly) (interchain with G-Cter in SUMO2) cross-link involves residue lysine 257.

Belongs to the krueppel C2H2-type zinc-finger protein family. As to expression, expressed in the organ of Corti, stria vascularis, auditory nerve and retina. Lower levels in the tongue, cerebellum, small intestine and kidney.

The protein localises to the nucleus. May be involved in transcriptional regulation. The chain is Zinc finger protein 664 (ZNF664) from Cavia porcellus (Guinea pig).